Consider the following 491-residue polypeptide: Protein nucleotidyltransferase YdiU (491 aa).

Residues G92, G94, R95, K115, D127, G128, R178, and R185 each coordinate ATP. D254 serves as the catalytic Proton acceptor. Residues N255 and D264 each coordinate Mg(2+). D264 provides a ligand contact to ATP.

This sequence belongs to the SELO family. Requires Mg(2+) as cofactor. Mn(2+) is required as a cofactor.

The enzyme catalyses L-seryl-[protein] + ATP = 3-O-(5'-adenylyl)-L-seryl-[protein] + diphosphate. The catalysed reaction is L-threonyl-[protein] + ATP = 3-O-(5'-adenylyl)-L-threonyl-[protein] + diphosphate. It carries out the reaction L-tyrosyl-[protein] + ATP = O-(5'-adenylyl)-L-tyrosyl-[protein] + diphosphate. It catalyses the reaction L-histidyl-[protein] + UTP = N(tele)-(5'-uridylyl)-L-histidyl-[protein] + diphosphate. The enzyme catalyses L-seryl-[protein] + UTP = O-(5'-uridylyl)-L-seryl-[protein] + diphosphate. The catalysed reaction is L-tyrosyl-[protein] + UTP = O-(5'-uridylyl)-L-tyrosyl-[protein] + diphosphate. In terms of biological role, nucleotidyltransferase involved in the post-translational modification of proteins. It can catalyze the addition of adenosine monophosphate (AMP) or uridine monophosphate (UMP) to a protein, resulting in modifications known as AMPylation and UMPylation. This chain is Protein nucleotidyltransferase YdiU, found in Pseudarthrobacter chlorophenolicus (strain ATCC 700700 / DSM 12829 / CIP 107037 / JCM 12360 / KCTC 9906 / NCIMB 13794 / A6) (Arthrobacter chlorophenolicus).